Reading from the N-terminus, the 199-residue chain is Transgelin-3 (199 aa).

The Calponin-homology (CH) domain maps to 24–136 (ADLENKLVDW…RTLMALGSVA (113 aa)). A Phosphoserine modification is found at S163. The stretch at 174 to 199 (IGLQMGSNKGASQAGMTGYGMPRQIM) is one Calponin-like repeat. A compositionally biased stretch (polar residues) spans 178-188 (MGSNKGASQAG). The disordered stretch occupies residues 178–199 (MGSNKGASQAGMTGYGMPRQIM).

It belongs to the calponin family.

The protein is Transgelin-3 (Tagln3) of Mus musculus (Mouse).